Consider the following 2210-residue polypeptide: RNA-directed RNA polymerase L (2210 aa).

The endonuclease stretch occupies residues 26–284 (KDAFLSHCHS…KHEDNTTSDC (259 aa)). Residues E51, D89, and E102 each contribute to the Mn(2+) site. Residue K115 is part of the active site. A RdRp catalytic domain is found at 1172 to 1368 (CDMKLAVNNG…YLSSKLNKFV (197 aa)). Residue D1330 coordinates Mg(2+).

It belongs to the Bunyavirales RNA polymerase family. As to quaternary structure, homomultimer; the oligomeric structure is essential for the polymerase activity. Interacts with nucleoprotein N. Interacts with protein Z; this interaction inhibits viral transcription and replication, Z partially blocks the product exit tunnel for the releasing nascent RNA product. Mn(2+) serves as cofactor. Requires Mg(2+) as cofactor.

It localises to the virion. The protein resides in the host cytoplasm. The catalysed reaction is RNA(n) + a ribonucleoside 5'-triphosphate = RNA(n+1) + diphosphate. In terms of biological role, RNA-dependent RNA polymerase, which is responsible for the replication and transcription of the viral RNA genome using antigenomic RNA as an intermediate. During transcription, synthesizes subgenomic RNAs and assures their capping by a cap-snatching mechanism, which involves the endonuclease activity cleaving the host capped pre-mRNAs. These short capped RNAs are then used as primers for viral transcription. The 3'-end of subgenomic mRNAs molecules are heterogeneous and not polyadenylated. The replicase function is to direct synthesis of antigenomic and genomic RNA which are encapsidated and non capped. As a consequence of the use of the same enzyme for both transcription and replication, these mechanisms need to be well coordinated. These processes may be regulated by proteins N and Z in a dose-dependent manner. Z protein inhibits the viral polymerase L und thus the viral transcription and RNA synthesis. This chain is RNA-directed RNA polymerase L, found in Tacaribe virus (strain Franze-Fernandez) (TCRV).